The following is a 223-amino-acid chain: Holliday junction branch migration complex subunit RuvA (223 aa).

Positions 1–64 (MIGKLTGRLD…EDLLQLFGFL (64 aa)) are domain I. The domain II stretch occupies residues 65–143 (SPYEKEWHRL…AVMAMGGTLD (79 aa)). Positions 144–171 (DAMDDVVDDMPGESAAPAPAPQPRAPKR) are flexible linker. The tract at residues 148–177 (DVVDDMPGESAAPAPAPQPRAPKRPASNAQ) is disordered. The segment at 172-223 (PASNAQAEALSALQNLGYGPSDAAQAVAQAAESASNTPELIRAALRLLAPKE) is domain III.

Belongs to the RuvA family. In terms of assembly, homotetramer. Forms an RuvA(8)-RuvB(12)-Holliday junction (HJ) complex. HJ DNA is sandwiched between 2 RuvA tetramers; dsDNA enters through RuvA and exits via RuvB. An RuvB hexamer assembles on each DNA strand where it exits the tetramer. Each RuvB hexamer is contacted by two RuvA subunits (via domain III) on 2 adjacent RuvB subunits; this complex drives branch migration. In the full resolvosome a probable DNA-RuvA(4)-RuvB(12)-RuvC(2) complex forms which resolves the HJ.

It is found in the cytoplasm. Functionally, the RuvA-RuvB-RuvC complex processes Holliday junction (HJ) DNA during genetic recombination and DNA repair, while the RuvA-RuvB complex plays an important role in the rescue of blocked DNA replication forks via replication fork reversal (RFR). RuvA specifically binds to HJ cruciform DNA, conferring on it an open structure. The RuvB hexamer acts as an ATP-dependent pump, pulling dsDNA into and through the RuvAB complex. HJ branch migration allows RuvC to scan DNA until it finds its consensus sequence, where it cleaves and resolves the cruciform DNA. The chain is Holliday junction branch migration complex subunit RuvA from Jannaschia sp. (strain CCS1).